The sequence spans 473 residues: Ribosomal RNA small subunit methyltransferase F (473 aa).

Residues 124 to 130, E148, D175, and D193 each bind S-adenosyl-L-methionine; that span reads ASAPGSK. Residue C246 is the Nucleophile of the active site.

The protein belongs to the class I-like SAM-binding methyltransferase superfamily. RsmB/NOP family.

It is found in the cytoplasm. The enzyme catalyses cytidine(1407) in 16S rRNA + S-adenosyl-L-methionine = 5-methylcytidine(1407) in 16S rRNA + S-adenosyl-L-homocysteine + H(+). Functionally, specifically methylates the cytosine at position 1407 (m5C1407) of 16S rRNA. This Aliivibrio fischeri (strain MJ11) (Vibrio fischeri) protein is Ribosomal RNA small subunit methyltransferase F.